We begin with the raw amino-acid sequence, 476 residues long: MSYEERVNAHPNLGDESDVEEEALVNDYREQVNFDDGMSELERTTSLGAASQTQDLQAQLAAAATPLEYQATLETKFASYDNYCSLFHYILNSEGPVELEVPSYYWAWDVIDEFIYQFESFCRYRNRVARSGSNEEEAQLLRENPNTWGCYSVLNVLYSLIQRSQINEQLAAIKRGEDPLTVAGEYGSRPLYKMLGYFSIIGLLRVHCLLGDFSLALKTLDDIEMNKKAMFARVMAAHFTTYYYVGFSYMMMRRYGDAIRMFSHILVYVSRTKNFQKGGNSYDAIAKKNDQMYALIAICVALHPTRLDDTIHSALREKYGEQLIRLQHGGPEALPLFEELFRSACPKFISPTPPDFDNPAVNVDPVDHHTAIFMDEVKNTLYNPTIRSYLKLYTTMDLKKLAGFLEVEPEKLRSWLLVNKQRSRQVRWVEGGLLEGEPVNANDLDYALENDLIHVSETKAGRRLVDWYLRNLARVY.

One can recognise a PCI domain in the interval 257-452 (DAIRMFSHIL…DLDYALENDL (196 aa)).

The protein belongs to the eIF-3 subunit L family. In terms of assembly, component of the eukaryotic translation initiation factor 3 (eIF-3) complex.

It localises to the cytoplasm. Functionally, component of the eukaryotic translation initiation factor 3 (eIF-3) complex, which is involved in protein synthesis of a specialized repertoire of mRNAs and, together with other initiation factors, stimulates binding of mRNA and methionyl-tRNAi to the 40S ribosome. The eIF-3 complex specifically targets and initiates translation of a subset of mRNAs involved in cell proliferation. This is Eukaryotic translation initiation factor 3 subunit L from Aspergillus clavatus (strain ATCC 1007 / CBS 513.65 / DSM 816 / NCTC 3887 / NRRL 1 / QM 1276 / 107).